The following is a 207-amino-acid chain: Large ribosomal subunit protein uL4 (207 aa).

The tract at residues 50–76 (AVKNRSAVSGGGRKPWKQKGTGRARQG) is disordered.

Belongs to the universal ribosomal protein uL4 family. As to quaternary structure, part of the 50S ribosomal subunit.

One of the primary rRNA binding proteins, this protein initially binds near the 5'-end of the 23S rRNA. It is important during the early stages of 50S assembly. It makes multiple contacts with different domains of the 23S rRNA in the assembled 50S subunit and ribosome. Its function is as follows. Forms part of the polypeptide exit tunnel. This is Large ribosomal subunit protein uL4 from Staphylococcus aureus (strain MRSA252).